The following is a 279-amino-acid chain: 3-methyl-2-oxobutanoate hydroxymethyltransferase (279 aa).

Mg(2+) is bound by residues D43 and D82. Residues 43–44 (DS), D82, and K112 each bind 3-methyl-2-oxobutanoate. E114 is a Mg(2+) binding site. The active-site Proton acceptor is the E181.

This sequence belongs to the PanB family. In terms of assembly, homodecamer; pentamer of dimers. The cofactor is Mg(2+).

It localises to the cytoplasm. The catalysed reaction is 3-methyl-2-oxobutanoate + (6R)-5,10-methylene-5,6,7,8-tetrahydrofolate + H2O = 2-dehydropantoate + (6S)-5,6,7,8-tetrahydrofolate. Its pathway is cofactor biosynthesis; (R)-pantothenate biosynthesis; (R)-pantoate from 3-methyl-2-oxobutanoate: step 1/2. In terms of biological role, catalyzes the reversible reaction in which hydroxymethyl group from 5,10-methylenetetrahydrofolate is transferred onto alpha-ketoisovalerate to form ketopantoate. This chain is 3-methyl-2-oxobutanoate hydroxymethyltransferase, found in Lysinibacillus sphaericus (strain C3-41).